The following is a 215-amino-acid chain: MSKAIVLDSHLKEKGSVELPKRYEGINSHNLYLYVKHYLSSVRANTAKSKNRAEVSGGGRKPWAQKGGGRARAGSITSPVFVGGGVSHGATNKRNYNLKINKKQKRLALEYALEEKAQANKLFVVEKIAIKGVVEDNKRKHLTKEANQMFQALEQRDTLFVCLNMDECTELAFSNLKKCLIIDVNELNAYLLAAFSSVVMEEAAFQHVVQDKTEE.

A disordered region spans residues 46 to 76 (TAKSKNRAEVSGGGRKPWAQKGGGRARAGSI). Residues 56–71 (SGGGRKPWAQKGGGRA) are compositionally biased toward gly residues.

This sequence belongs to the universal ribosomal protein uL4 family. As to quaternary structure, part of the 50S ribosomal subunit.

In terms of biological role, one of the primary rRNA binding proteins, this protein initially binds near the 5'-end of the 23S rRNA. It is important during the early stages of 50S assembly. It makes multiple contacts with different domains of the 23S rRNA in the assembled 50S subunit and ribosome. Functionally, forms part of the polypeptide exit tunnel. This chain is Large ribosomal subunit protein uL4, found in Helicobacter pylori (strain HPAG1).